The following is a 183-amino-acid chain: Intraflagellar transport protein 27 homolog (183 aa).

GTP-binding positions include 12–19, 63–67, and 120–123; these read GAPTVGKT, DVSGQ, and NKSD.

Belongs to the small GTPase superfamily. Rab family. In terms of assembly, component of the IFT complex B.

It localises to the cell projection. Its subcellular location is the cilium. The protein localises to the flagellum. Small GTPase-like component of the intraflagellar transport (IFT) complex B required for both anterograde and retrograde intraflagellar transport. May be involved in cargo loading of the retrograde transport. The chain is Intraflagellar transport protein 27 homolog from Trypanosoma brucei brucei (strain 927/4 GUTat10.1).